Here is a 374-residue protein sequence, read N- to C-terminus: Ribosomal RNA large subunit methyltransferase G (374 aa).

This sequence belongs to the methyltransferase superfamily. RlmG family.

The protein localises to the cytoplasm. The catalysed reaction is guanosine(1835) in 23S rRNA + S-adenosyl-L-methionine = N(2)-methylguanosine(1835) in 23S rRNA + S-adenosyl-L-homocysteine + H(+). Functionally, specifically methylates the guanine in position 1835 (m2G1835) of 23S rRNA. In Pseudomonas putida (strain ATCC 47054 / DSM 6125 / CFBP 8728 / NCIMB 11950 / KT2440), this protein is Ribosomal RNA large subunit methyltransferase G.